Consider the following 977-residue polypeptide: Ephrin type-A receptor 1 (977 aa).

The signal sequence occupies residues 1 to 26 (MERRWPLGLALLLLLLCAPLPPGARA). Over 27–548 (EEVTLMDTST…PVSRSLTGGE (522 aa)) the chain is Extracellular. The Eph LBD domain maps to 28 to 210 (EVTLMDTSTA…FYQRCAETVH (183 aa)). 2 Fibronectin type-III domains span residues 333–446 (PPSA…MGHA) and 448–539 (SLSG…TSPP). N-linked (GlcNAc...) asparagine glycosylation is found at asparagine 415 and asparagine 479. Residues 549–569 (IVAVIFGLLLGIALLIGIYVF) form a helical membrane-spanning segment. Residues 570–977 (RSRRGQRQRQ…ILCSIQGFKD (408 aa)) lie on the Cytoplasmic side of the membrane. Phosphotyrosine; by autocatalysis occurs at positions 600 and 606. The 261-residue stretch at 625–885 (LIVDTVIGEG…QLQAHLEQLL (261 aa)) folds into the Protein kinase domain. Residues 631–639 (IGEGEFGEV) and lysine 657 contribute to the ATP site. Residue aspartate 750 is the Proton acceptor of the active site. Residue tyrosine 782 is modified to Phosphotyrosine; by autocatalysis. 2 positions are modified to phosphoserine: serine 907 and serine 911. One can recognise an SAM domain in the interval 914–977 (IPYRSVSEWL…ILCSIQGFKD (64 aa)). The PDZ-binding motif lies at 975 to 977 (FKD).

The protein belongs to the protein kinase superfamily. Tyr protein kinase family. Ephrin receptor subfamily. As to quaternary structure, homodimer. Forms a signaling complex with LCK; PTK2B/PYK2 and PI3-kinase upon activation by EFNA1; regulates T-lymphocytes migration. Interacts (via SAM domain) with ILK (via ANK repeats); stimulated by EFNA1 but independent of the kinase activity of EPHA1. Interacts (kinase activity-dependent) with PTK2/FAK1. Post-translationally, phosphorylated. Autophosphorylation is stimulated by its ligand EFNA1. Ubiquitinated. In terms of tissue distribution, preferentially expressed in epithelial cells including skin, kidney, liver and thymus. Expressed in myogenic progenitor cells.

The protein resides in the cell membrane. It carries out the reaction L-tyrosyl-[protein] + ATP = O-phospho-L-tyrosyl-[protein] + ADP + H(+). Its function is as follows. Receptor tyrosine kinase which binds promiscuously membrane-bound ephrin-A family ligands residing on adjacent cells, leading to contact-dependent bidirectional signaling into neighboring cells. The signaling pathway downstream of the receptor is referred to as forward signaling while the signaling pathway downstream of the ephrin ligand is referred to as reverse signaling. Binds with a low affinity EFNA3 and EFNA4 and with a high affinity to EFNA1 which most probably constitutes its cognate/functional ligand. Upon activation by EFNA1 induces cell attachment to the extracellular matrix inhibiting cell spreading and motility through regulation of ILK and downstream RHOA and RAC. Also plays a role in angiogenesis and regulates cell proliferation. May play a role in apoptosis. The polypeptide is Ephrin type-A receptor 1 (Epha1) (Mus musculus (Mouse)).